The chain runs to 677 residues: Potassium channel KAT1 (677 aa).

Residues M1–E63 lie on the Cytoplasmic side of the membrane. Residues M64 to I84 form a helical membrane-spanning segment. Topologically, residues T85–A90 are extracellular. The chain crosses the membrane as a helical span at residues I91–F111. At V112–L134 the chain is on the cytoplasmic side. The helical transmembrane segment at S135–F155 threads the bilayer. Topologically, residues N156–R165 are extracellular. A helical; Voltage-sensor membrane pass occupies residues I166–E186. The Cytoplasmic segment spans residues K187–K200. A helical membrane pass occupies residues L201 to D221. At R222 to V248 the chain is on the extracellular side. Residues T249 to A268 constitute an intramembrane region (pore-forming). At E269–R272 the chain is on the extracellular side. A helical membrane pass occupies residues E273–G293. The Cytoplasmic portion of the chain corresponds to N294 to N677. L377–K496 is an a nucleoside 3',5'-cyclic phosphate binding site. Residues I568–S577 are compositionally biased toward basic and acidic residues. Positions I568 to Q601 are disordered. The 66-residue stretch at R612–N677 folds into the KHA domain.

This sequence belongs to the potassium channel family. Plant (TC 1.A.1.4) subfamily. In terms of assembly, the potassium channel is probably composed of a homo- or heterotetrameric complex of pore-forming subunits. May interact with AKT2 and KAT2. Interacts with SLAC1 and SLAH3. In terms of tissue distribution, expressed in guard cells, and in roots.

Its subcellular location is the membrane. Functionally, highly selective inward-rectifying potassium channel. This voltage-gated channel could mediate long-term potassium influx into guard cells leading to stomatal opening. Assuming opened or closed conformations in response to the voltage difference across the membrane, the channel is activated by hyperpolarization. The channel activity is enhanced upon external acidification. Also permeable to ammonium ions. Blocked by tetraethylammonium and barium ions. This Arabidopsis thaliana (Mouse-ear cress) protein is Potassium channel KAT1 (KAT1).